The primary structure comprises 593 residues: Monoterpene synthase 7, chloroplastic (593 aa).

The transit peptide at 1–39 (MSVSLSFAASATFGFRGGLGGFSRPAAAIKQWRCLPRIQ) directs the protein to the chloroplast. The Mg(2+) site is built by Asp-348, Asp-352, Asp-491, and Glu-499. Residues 348–352 (DDVYD) carry the DDXXD motif motif.

Belongs to the terpene synthase family. Tpsa subfamily. The cofactor is Mg(2+). Requires Mn(2+) as cofactor. As to expression, highly expressed in flowers, petals and sepals, but almost undetectable in vegetative organs.

Its subcellular location is the plastid. The protein resides in the chloroplast. It catalyses the reaction (2E)-geranyl diphosphate = sabinene + diphosphate. The catalysed reaction is (2E)-geranyl diphosphate = terpinolene + diphosphate. The enzyme catalyses (2E)-geranyl diphosphate = alpha-pinene + diphosphate. It carries out the reaction (2E)-geranyl diphosphate = beta-pinene + diphosphate. It catalyses the reaction (2E)-geranyl diphosphate = beta-myrcene + diphosphate. The catalysed reaction is (2E)-geranyl diphosphate = alpha-terpinene + diphosphate. The enzyme catalyses (2E)-geranyl diphosphate = beta-phellandrene + diphosphate. It carries out the reaction (2E)-geranyl diphosphate = gamma-terpinene + diphosphate. It participates in secondary metabolite biosynthesis; terpenoid biosynthesis. Its function is as follows. Monoterpene synthase involved in the biosynthesis of volatile compounds present in floral scent. Mediates the conversion of (2E)-geranyl diphosphate (GPP) into sabinene and sub-products such as alpha-thujene, alpha-pinene, beta-pinene, myrcene, alpha-phellandrene, alpha-terpinene, beta-phellandrene, gamma-terpinene and terpinolene. Unable to use farnesyl diphosphate (FPP) as substrate. In Hedychium coronarium (White butterfly ginger-lily), this protein is Monoterpene synthase 7, chloroplastic.